The sequence spans 100 residues: Enhancer of yellow 2 transcription factor (100 aa).

This sequence belongs to the ENY2 family. Component of the nuclear pore complex (NPC)-associated AMEX complex (anchoring and mRNA export complex), composed of at least e(y)2 and xmas-2. Component of the SAGA transcription coactivator-HAT complexes, at least composed of Ada2b, e(y)2, Pcaf/Gcn5, Taf10 and Nipped-A/Trrap. Within the SAGA complex, e(y)2, Sgf11, and not/nonstop form an additional subcomplex of SAGA called the DUB module (deubiquitination module). Component of the THO complex, composed of at least e(y)2, HPR1, THO2, THOC5, THOC6 and THOC7. Interacts with e(y)1. Interacts with su(Hw) (via zinc fingers). Interacts with xmas-2; required for localization to the nuclear periphery. Interacts with the nuclear pore complex (NPC).

Its subcellular location is the nucleus. It localises to the nucleoplasm. It is found in the cytoplasm. Its function is as follows. Involved in mRNA export coupled transcription activation by association with both the AMEX and the SAGA complexes. The SAGA complex is a multiprotein complex that activates transcription by remodeling chromatin and mediating histone acetylation and deubiquitination. Within the SAGA complex, participates in a subcomplex that specifically deubiquitinates histone H2B. The SAGA complex is recruited to specific gene promoters by activators, where it is required for transcription. Required for nuclear receptor-mediated transactivation. Involved in transcription elongation by recruiting the THO complex onto nascent mRNA. The AMEX complex functions in docking export-competent ribonucleoprotein particles (mRNPs) to the nuclear entrance of the nuclear pore complex (nuclear basket). AMEX participates in mRNA export and accurate chromatin positioning in the nucleus by tethering genes to the nuclear periphery. In Drosophila pseudoobscura pseudoobscura (Fruit fly), this protein is Enhancer of yellow 2 transcription factor.